The sequence spans 758 residues: Protein SPT21 (758 aa).

Disordered regions lie at residues 251 to 271 (NNTN…APKA), 372 to 414 (ININ…AGCR), 438 to 471 (GIEG…SITS), and 624 to 651 (VIDS…SDNN). Low complexity predominate over residues 395-408 (VKVKNSNSKNSAKS). Position 454 is a phosphoserine (serine 454). Residues 626-651 (DSDNTKPQAGLINFSTPADQPASDNN) show a composition bias toward polar residues.

Functionally, required for normal transcription at a number of loci in yeast. This is Protein SPT21 (SPT21) from Saccharomyces cerevisiae (strain ATCC 204508 / S288c) (Baker's yeast).